A 935-amino-acid chain; its full sequence is ABC transporter A family member 7 (935 aa).

7 helical membrane-spanning segments follow: residues 34-54 (LIMI…LFDT), 338-358 (IASL…FPVI), 392-412 (FLTI…AIGL), 424-444 (FVFY…VSSV), 454-474 (ASYI…NFLI), 483-503 (WIIV…YELA), and 528-548 (DDVF…AYYI). Positions 571 to 591 (SLRRPSLQRQGSKVSVDMEKP) are disordered. One can recognise an ABC transporter domain in the interval 613-850 (IVCDNLKKVY…YGGSYVFTMT (238 aa)). ATP is bound at residue 651–658 (GPNGAGKT).

It belongs to the ABC transporter superfamily. ABCA family. CPR flippase (TC 3.A.1.211) subfamily.

The protein resides in the membrane. The polypeptide is ABC transporter A family member 7 (ABCA7) (Arabidopsis thaliana (Mouse-ear cress)).